A 284-amino-acid chain; its full sequence is Nucleotide-binding protein Shewmr4_0670 (284 aa).

Residue 8-15 (GRSGSGKS) coordinates ATP. Residue 56-59 (DVRN) participates in GTP binding.

The protein belongs to the RapZ-like family.

Displays ATPase and GTPase activities. This Shewanella sp. (strain MR-4) protein is Nucleotide-binding protein Shewmr4_0670.